The primary structure comprises 33 residues: Trypsin inhibitor 1 (33 aa).

3 disulfides stabilise this stretch: C1/C17, C8/C21, and C16/C32.

As to expression, expressed in leaves and fruit flesh (at protein level).

Inhibits trypsin (IC(50)=471 nM). The protein is Trypsin inhibitor 1 of Beta vulgaris subsp. vulgaris (Beet).